Consider the following 2280-residue polypeptide: Protein Ycf2 (2280 aa).

Position 1631–1638 (1631–1638) interacts with ATP; the sequence is GSIGTGRS.

Belongs to the Ycf2 family.

Its subcellular location is the plastid. It is found in the chloroplast stroma. Functionally, probable ATPase of unknown function. Its presence in a non-photosynthetic plant (Epifagus virginiana) and experiments in tobacco indicate that it has an essential function which is probably not related to photosynthesis. The sequence is that of Protein Ycf2 from Nicotiana tomentosiformis (Tobacco).